The following is a 40-amino-acid chain: Photosystem II reaction center protein J (40 aa).

The helical transmembrane segment at 8–28 (IPLWLIGTVTGIAVIGLIGVF) threads the bilayer.

Belongs to the PsbJ family. PSII is composed of 1 copy each of membrane proteins PsbA, PsbB, PsbC, PsbD, PsbE, PsbF, PsbH, PsbI, PsbJ, PsbK, PsbL, PsbM, PsbT, PsbX, PsbY, PsbZ, Psb30/Ycf12, at least 3 peripheral proteins of the oxygen-evolving complex and a large number of cofactors. It forms dimeric complexes.

It is found in the plastid. Its subcellular location is the chloroplast thylakoid membrane. Its function is as follows. One of the components of the core complex of photosystem II (PSII). PSII is a light-driven water:plastoquinone oxidoreductase that uses light energy to abstract electrons from H(2)O, generating O(2) and a proton gradient subsequently used for ATP formation. It consists of a core antenna complex that captures photons, and an electron transfer chain that converts photonic excitation into a charge separation. This chain is Photosystem II reaction center protein J, found in Oryza nivara (Indian wild rice).